The sequence spans 1098 residues: Platelet-derived growth factor receptor beta (1098 aa).

The signal sequence occupies residues 1–31 (MGLPGVIPALVLRGQLLLSVLWLLGPQTSRG). Residues 32-531 (LVITPPGPEF…VVPHSLPFKV (500 aa)) lie on the Extracellular side of the membrane. Ig-like C2-type domains are found at residues 33-119 (VITP…YIFV), 128-209 (PMDS…YSLQ), 213-308 (INVS…INIS), 330-402 (HRSR…HEDD), and 415-523 (PVRV…VTVV). 3 N-linked (GlcNAc...) asparagine glycosylation sites follow: asparagine 44, asparagine 88, and asparagine 102. Cysteine 53 and cysteine 99 are disulfide-bonded. An intrachain disulfide couples cysteine 148 to cysteine 189. N-linked (GlcNAc...) asparagine glycosylation occurs at asparagine 214. Residues cysteine 234 and cysteine 290 are joined by a disulfide bond. N-linked (GlcNAc...) asparagine glycans are attached at residues asparagine 291, asparagine 306, asparagine 353, asparagine 370, asparagine 444, asparagine 467, and asparagine 478. An intrachain disulfide couples cysteine 435 to cysteine 507. Residues 532–552 (VVISAILALVVLTVISLIILI) form a helical membrane-spanning segment. Residues 553-1098 (MLWQKKPRYE…PLAEAEDSFL (546 aa)) lie on the Cytoplasmic side of the membrane. Tyrosine 561, tyrosine 578, and tyrosine 580 each carry phosphotyrosine; by autocatalysis. One can recognise a Protein kinase domain in the interval 599 to 961 (LVLGRTLGSG…QLVLLLERLL (363 aa)). ATP is bound by residues 605-613 (LGSGAFGQV) and lysine 633. At tyrosine 685 the chain carries Phosphotyrosine; by ABL1 and ABL2. Phosphotyrosine; by autocatalysis is present on residues tyrosine 715, tyrosine 739, tyrosine 750, tyrosine 762, tyrosine 770, tyrosine 774, and tyrosine 777. The active-site Proton acceptor is aspartate 825. At tyrosine 856 the chain carries Phosphotyrosine; by autocatalysis. Phosphotyrosine; by ABL1 and ABL2 is present on residues tyrosine 933 and tyrosine 969. Phosphotyrosine; by autocatalysis is present on residues tyrosine 1008 and tyrosine 1020. A disordered region spans residues 1016-1098 (SDNDYIIPLP…PLAEAEDSFL (83 aa)). Over residues 1042 to 1059 (SLASSTLNEVNTSSTISC) the composition is skewed to polar residues. The span at 1062–1082 (PLELQEEPQQAEPEAQLEQPQ) shows a compositional bias: low complexity.

This sequence belongs to the protein kinase superfamily. Tyr protein kinase family. CSF-1/PDGF receptor subfamily. In terms of assembly, interacts with homodimeric PDGFB and PDGFD, and with heterodimers formed by PDGFA and PDGFB. May also interact with homodimeric PDGFC. Monomer in the absence of bound ligand. Interaction with homodimeric PDGFB, heterodimers formed by PDGFA and PDGFB or homodimeric PDGFD, leads to receptor dimerization, where both PDGFRA homodimers and heterodimers with PDGFRB are observed. Interacts with SH2B2/APS. Interacts directly (tyrosine phosphorylated) with SHB. Interacts (tyrosine phosphorylated) with PIK3R1 and RASA1. Interacts (tyrosine phosphorylated) with CBL. Interacts (tyrosine phosphorylated) with SRC and SRC family kinases. Interacts (tyrosine phosphorylated) with PIK3C2B, maybe indirectly. Interacts (tyrosine phosphorylated) with SHC1, GRB7, GRB10 and NCK1. Interaction with GRB2 is mediated by SHC1. Interacts (via C-terminus) with NHERF1. Autophosphorylated on tyrosine residues upon ligand binding. Autophosphorylation occurs in trans, i.e. one subunit of the dimeric receptor phosphorylates tyrosine residues on the other subunit. Phosphorylation at Tyr-578, and to a lesser degree, Tyr-580 is important for interaction with SRC. Phosphorylation at Tyr-715 is important for interaction with GRB2. Phosphorylation at Tyr-739 and Tyr-750 is important for interaction with PIK3R1. Phosphorylation at Tyr-750 is important for interaction with NCK1. Phosphorylation at Tyr-770 and Tyr-856 is important for interaction with RASA1/GAP. Phosphorylation at Tyr-856 is important for efficient phosphorylation of PLCG1 and PTPN11, resulting in increased phosphorylation of AKT1, MAPK1/ERK2 and/or MAPK3/ERK1, PDCD6IP/ALIX and STAM, and in increased cell proliferation. Phosphorylation at Tyr-1008 is important for interaction with PTPN11. Phosphorylation at Tyr-1008 and Tyr-1020 is important for interaction with PLCG1. Dephosphorylated by PTPRJ at Tyr-750, Tyr-856, Tyr-1008 and Tyr-1020. Dephosphorylated by PTPN2 at Tyr-578 and Tyr-1020. Post-translationally, N-glycosylated. In terms of processing, ubiquitinated. After autophosphorylation, the receptor is polyubiquitinated, leading to its degradation. Weakly expressed in glomerular mesangial cells and interstitial cells. Up-regulated in areas of renal fibrosis. In mice with unilateral ureteral obstruction, increased expression in interstitial cells at day 4 and expression is markedly elevated at day 7 and is maximal at day 14.

It localises to the cell membrane. It is found in the cytoplasmic vesicle. The protein localises to the lysosome lumen. It carries out the reaction L-tyrosyl-[protein] + ATP = O-phospho-L-tyrosyl-[protein] + ADP + H(+). With respect to regulation, present in an inactive conformation in the absence of bound ligand. Binding of PDGFB and/or PDGFD leads to dimerization and activation by autophosphorylation on tyrosine residues. Functionally, tyrosine-protein kinase that acts as a cell-surface receptor for homodimeric PDGFB and PDGFD and for heterodimers formed by PDGFA and PDGFB, and plays an essential role in the regulation of embryonic development, cell proliferation, survival, differentiation, chemotaxis and migration. Plays an essential role in blood vessel development by promoting proliferation, migration and recruitment of pericytes and smooth muscle cells to endothelial cells. Plays a role in the migration of vascular smooth muscle cells and the formation of neointima at vascular injury sites. Required for normal development of the cardiovascular system. Required for normal recruitment of pericytes (mesangial cells) in the kidney glomerulus, and for normal formation of a branched network of capillaries in kidney glomeruli. Promotes rearrangement of the actin cytoskeleton and the formation of membrane ruffles. Binding of its cognate ligands - homodimeric PDGFB, heterodimers formed by PDGFA and PDGFB or homodimeric PDGFD -leads to the activation of several signaling cascades; the response depends on the nature of the bound ligand and is modulated by the formation of heterodimers between PDGFRA and PDGFRB. Phosphorylates PLCG1, PIK3R1, PTPN11, RASA1/GAP, CBL, SHC1 and NCK1. Activation of PLCG1 leads to the production of the cellular signaling molecules diacylglycerol and inositol 1,4,5-trisphosphate, mobilization of cytosolic Ca(2+) and the activation of protein kinase C. Phosphorylation of PIK3R1, the regulatory subunit of phosphatidylinositol 3-kinase, leads to the activation of the AKT1 signaling pathway. Phosphorylation of SHC1, or of the C-terminus of PTPN11, creates a binding site for GRB2, resulting in the activation of HRAS, RAF1 and down-stream MAP kinases, including MAPK1/ERK2 and/or MAPK3/ERK1. Promotes phosphorylation and activation of SRC family kinases. Promotes phosphorylation of PDCD6IP/ALIX and STAM. Receptor signaling is down-regulated by protein phosphatases that dephosphorylate the receptor and its down-stream effectors, and by rapid internalization of the activated receptor. The chain is Platelet-derived growth factor receptor beta (Pdgfrb) from Mus musculus (Mouse).